A 204-amino-acid chain; its full sequence is Photosynthetic NDH subunit of subcomplex B 3, chloroplastic (204 aa).

2 disordered regions span residues 1-24 and 45-68; these read MGSVQLSGSGLVASLPPNHSFSHK and KTVRAISTAPASQPPAADEPDEPP. Residues 1–48 constitute a chloroplast transit peptide; it reads MGSVQLSGSGLVASLPPNHSFSHKTKLNKPNSYFFRSKHNAARTKTVR. The 2Fe-2S ferredoxin-type domain maps to 76-180; sequence HSVLLPDGTP…STGLVVIQQL (105 aa). Residues Cys120, Cys126, Cys129, and Cys162 each coordinate [2Fe-2S] cluster.

As to quaternary structure, part of the chloroplast NDH complex, composed of a mixture of chloroplast and nucleus encoded subunits. Component of the NDH subcomplex B, at least composed of PnsB1, PnsB2, PnsB3, PnsB4 and PnsB5.

It is found in the plastid. The protein localises to the chloroplast thylakoid membrane. In terms of biological role, NDH shuttles electrons from NAD(P)H:plastoquinone, via FMN and iron-sulfur (Fe-S) centers, to quinones in the photosynthetic chain and possibly in a chloroplast respiratory chain. The immediate electron acceptor for the enzyme in this species is believed to be plastoquinone. Couples the redox reaction to proton translocation, and thus conserves the redox energy in a proton gradient. In Arabidopsis thaliana (Mouse-ear cress), this protein is Photosynthetic NDH subunit of subcomplex B 3, chloroplastic.